The chain runs to 326 residues: ATP synthase gamma chain (326 aa).

It belongs to the ATPase gamma chain family. As to quaternary structure, F-type ATPases have 2 components, CF(1) - the catalytic core - and CF(0) - the membrane proton channel. CF(1) has five subunits: alpha(3), beta(3), gamma(1), delta(1), epsilon(1). CF(0) has three main subunits: a, b and c.

It localises to the cell membrane. Functionally, produces ATP from ADP in the presence of a proton gradient across the membrane. The gamma chain is believed to be important in regulating ATPase activity and the flow of protons through the CF(0) complex. The protein is ATP synthase gamma chain of Corynebacterium jeikeium (strain K411).